A 345-amino-acid chain; its full sequence is Cytoskeleton protein RodZ (345 aa).

Residues 1–111 lie on the Cytoplasmic side of the membrane; it reads MNTEASQDQT…LGKKHKKRDG (111 aa). Residues 19–79 form the HTH cro/C1-type domain; the sequence is LRQARESLGL…KLVHLPEDEL (61 aa). The segment at residues 30 to 49 is a DNA-binding region (H-T-H motif); the sequence is QQTVAERLCLKVSTIRDIEE. A helical; Signal-anchor for type II membrane protein membrane pass occupies residues 112-132; that stretch reads WLMSFTWLIVLVVLGLTGAWW. Over 133–345 the chain is Periplasmic; the sequence is WQNHQAQQAE…RVARLTVCVE (213 aa). The segment at 151 to 259 is disordered; sequence SAQLSQNGGQ…PLPTADAGVS (109 aa). Positions 188 to 225 are enriched in polar residues; the sequence is PLTNHSGSAITNSATTSSVPKTTSTEPVDTANTNTTMH. Over residues 229 to 241 the composition is skewed to low complexity; that stretch reads AASAAVSPSQVPQ.

The protein belongs to the RodZ family.

The protein resides in the cell inner membrane. In terms of biological role, cytoskeletal protein that is involved in cell-shape control through regulation of the length of the long axis. The chain is Cytoskeleton protein RodZ from Yersinia pestis bv. Antiqua (strain Antiqua).